Here is a 449-residue protein sequence, read N- to C-terminus: Glycine--tRNA ligase (449 aa).

Positions 100 and 158 each coordinate substrate. ATP-binding positions include 190 to 192 (RNE), 200 to 205 (FRVREF), 275 to 276 (EL), and 319 to 322 (GIER). Residue 205 to 209 (FEQFE) participates in substrate binding. 315-319 (EPSVG) provides a ligand contact to substrate.

The protein belongs to the class-II aminoacyl-tRNA synthetase family. In terms of assembly, homodimer.

Its subcellular location is the cytoplasm. It carries out the reaction tRNA(Gly) + glycine + ATP = glycyl-tRNA(Gly) + AMP + diphosphate. Functionally, catalyzes the attachment of glycine to tRNA(Gly). The protein is Glycine--tRNA ligase of Mycoplasma pneumoniae (strain ATCC 29342 / M129 / Subtype 1) (Mycoplasmoides pneumoniae).